The sequence spans 81 residues: Toxin TdNa10 (81 aa).

Positions 1 to 20 (MWTFAIVLAFLLIGLDEGEA) are cleaved as a signal peptide. Residues 21-81 (LDGYPLSKNN…KMYPGELPCH (61 aa)) form the LCN-type CS-alpha/beta domain. 4 disulfides stabilise this stretch: Cys32–Cys80, Cys36–Cys57, Cys42–Cys62, and Cys46–Cys64.

It belongs to the long (4 C-C) scorpion toxin superfamily. Sodium channel inhibitor family. Beta subfamily. As to expression, expressed by the venom gland.

The protein localises to the secreted. Functionally, alpha toxins bind voltage-independently at site-3 of sodium channels (Nav) and inhibit the inactivation of the activated channels, thereby blocking neuronal transmission. This toxin binds, in vitro, to sodium channels and inhibits the inactivation of the activated channels. Seems not toxic to mice, crickets and sweet-water shrimps. This chain is Toxin TdNa10, found in Tityus discrepans (Venezuelan scorpion).